The primary structure comprises 522 residues: Protein nucleotidyltransferase YdiU (522 aa).

ATP-binding residues include Gly-109, Gly-111, Arg-112, Lys-132, Asp-144, Gly-145, Arg-195, and Arg-202. The active-site Proton acceptor is Asp-271. Mg(2+) contacts are provided by Asn-272 and Asp-281. Asp-281 contributes to the ATP binding site.

It belongs to the SELO family. Requires Mg(2+) as cofactor. It depends on Mn(2+) as a cofactor.

The enzyme catalyses L-seryl-[protein] + ATP = 3-O-(5'-adenylyl)-L-seryl-[protein] + diphosphate. The catalysed reaction is L-threonyl-[protein] + ATP = 3-O-(5'-adenylyl)-L-threonyl-[protein] + diphosphate. It carries out the reaction L-tyrosyl-[protein] + ATP = O-(5'-adenylyl)-L-tyrosyl-[protein] + diphosphate. It catalyses the reaction L-histidyl-[protein] + UTP = N(tele)-(5'-uridylyl)-L-histidyl-[protein] + diphosphate. The enzyme catalyses L-seryl-[protein] + UTP = O-(5'-uridylyl)-L-seryl-[protein] + diphosphate. The catalysed reaction is L-tyrosyl-[protein] + UTP = O-(5'-uridylyl)-L-tyrosyl-[protein] + diphosphate. In terms of biological role, nucleotidyltransferase involved in the post-translational modification of proteins. It can catalyze the addition of adenosine monophosphate (AMP) or uridine monophosphate (UMP) to a protein, resulting in modifications known as AMPylation and UMPylation. The chain is Protein nucleotidyltransferase YdiU from Burkholderia cenocepacia (strain HI2424).